Reading from the N-terminus, the 72-residue chain is MEYAARRNQKGAFEGFYKLIMRRNSVYVTFIIAGAFFGERAVDYGVHKLWERNNVGKRYEDISVLGQRPVEE.

Over 1–25 (MEYAARRNQKGAFEGFYKLIMRRNS) the chain is Mitochondrial matrix. A helical membrane pass occupies residues 26–42 (VYVTFIIAGAFFGERAV). The Mitochondrial intermembrane segment spans residues 43 to 72 (DYGVHKLWERNNVGKRYEDISVLGQRPVEE).

The protein belongs to the UQCR10/QCR9 family. In terms of assembly, component of the ubiquinol-cytochrome c oxidoreductase (cytochrome b-c1 complex, complex III, CIII), a multisubunit enzyme composed of 10 subunits. The complex is composed of 3 respiratory subunits cytochrome b (MT-CYB), cytochrome c1 (CYC1-1 or CYC1-2) and Rieske protein (UCR1-1 or UCR1-2), 2 core protein subunits MPPalpha1 (or MPPalpha2) and MPPB, and 5 low-molecular weight protein subunits QCR7-1 (or QCR7-2), UCRQ-1 (or UCRQ-2), QCR9, UCRY and probably QCR6-1 (or QCR6-2). The complex exists as an obligatory dimer and forms supercomplexes (SCs) in the inner mitochondrial membrane with NADH-ubiquinone oxidoreductase (complex I, CI), resulting in different assemblies (supercomplexes SCI(1)III(2) and SCI(2)III(4)).

It is found in the mitochondrion inner membrane. Component of the ubiquinol-cytochrome c oxidoreductase, a multisubunit transmembrane complex that is part of the mitochondrial electron transport chain which drives oxidative phosphorylation. The respiratory chain contains 3 multisubunit complexes succinate dehydrogenase (complex II, CII), ubiquinol-cytochrome c oxidoreductase (cytochrome b-c1 complex, complex III, CIII) and cytochrome c oxidase (complex IV, CIV), that cooperate to transfer electrons derived from NADH and succinate to molecular oxygen, creating an electrochemical gradient over the inner membrane that drives transmembrane transport and the ATP synthase. The cytochrome b-c1 complex catalyzes electron transfer from ubiquinol to cytochrome c, linking this redox reaction to translocation of protons across the mitochondrial inner membrane, with protons being carried across the membrane as hydrogens on the quinol. In the process called Q cycle, 2 protons are consumed from the matrix, 4 protons are released into the intermembrane space and 2 electrons are passed to cytochrome c. This is Cytochrome b-c1 complex subunit 9, mitochondrial (QCR9) from Arabidopsis thaliana (Mouse-ear cress).